The following is a 306-amino-acid chain: Pantothenate kinase (306 aa).

91 to 98 (GSVAVGKS) provides a ligand contact to ATP.

Belongs to the prokaryotic pantothenate kinase family.

Its subcellular location is the cytoplasm. It catalyses the reaction (R)-pantothenate + ATP = (R)-4'-phosphopantothenate + ADP + H(+). It functions in the pathway cofactor biosynthesis; coenzyme A biosynthesis; CoA from (R)-pantothenate: step 1/5. This is Pantothenate kinase from Streptococcus pneumoniae (strain 70585).